Consider the following 365-residue polypeptide: Serine/threonine-protein kinase SAPK6 (365 aa).

The 257-residue stretch at 4–260 folds into the Protein kinase domain; the sequence is YELLKDIGSG…IREIRNHPWF (257 aa). ATP-binding positions include 10 to 18 and Lys-33; that span reads IGSGNFGVA. Asp-123 (proton acceptor) is an active-site residue. Positions 298 to 365 are disordered; that stretch reads VQEAKTPPPS…AHASCDLQKS (68 aa). A compositionally biased stretch (acidic residues) spans 317–347; the sequence is TEEEEQEDGKNPDDDEGDRDEEEGEEGDSED.

It belongs to the protein kinase superfamily. Ser/Thr protein kinase family. Interacts with BZIP46. May be phosphorylated. As to expression, expressed in leaf blades and leaf sheaths. Expressed in shoots and roots of young seedlings.

The catalysed reaction is L-seryl-[protein] + ATP = O-phospho-L-seryl-[protein] + ADP + H(+). It catalyses the reaction L-threonyl-[protein] + ATP = O-phospho-L-threonyl-[protein] + ADP + H(+). Its activity is regulated as follows. Activated by hyperosmotic stress. In terms of biological role, may play a role in signal transduction of hyperosmotic response. Can phosphorylate ABI5 in vitro. Can phosphorylate BZIP46 in vitro. This chain is Serine/threonine-protein kinase SAPK6, found in Oryza sativa subsp. japonica (Rice).